A 148-amino-acid polypeptide reads, in one-letter code: Putative HTH-type transcriptional regulator NMA1593 (148 aa).

An HTH rrf2-type domain is found at arginine 2 to glutamate 131.

The protein is Putative HTH-type transcriptional regulator NMA1593 of Neisseria meningitidis serogroup A / serotype 4A (strain DSM 15465 / Z2491).